We begin with the raw amino-acid sequence, 270 residues long: Protein MGF 110-1L (270 aa).

A signal peptide spans 1-26 (MLGLQIFTLLSIPTLLYTYEIEPLER). At 27–117 (TSTPPEKEFG…HERHEADIRK (91 aa)) the chain is on the extracellular side. The A repeat unit spans residues 27 to 146 (TSTPPEKEFG…YIRKRSLQTV (120 aa)). Asparagine 75 carries N-linked (GlcNAc...) asparagine; by host glycosylation. Residues 118–138 (WQKLLTYGFYLAGCILAVNYI) traverse the membrane as a helical segment. Residues 139–145 (RKRSLQT) are Cytoplasmic-facing. Residues 146–166 (VMYLLVFLVISFLLSQLMLYG) form a helical membrane-spanning segment. One copy of the B repeat lies at 147-270 (MYLLVFLVIS…DNLMKKQDIM (124 aa)). The Extracellular portion of the chain corresponds to 167–270 (ELEDKKHKIG…DNLMKKQDIM (104 aa)).

This sequence belongs to the asfivirus MGF 110 family.

It localises to the membrane. Plays a role in virus cell tropism, and may be required for efficient virus replication in macrophages. The sequence is that of Protein MGF 110-1L from African swine fever virus (isolate Pig/Portugal/OURT88/1988) (ASFV).